Reading from the N-terminus, the 277-residue chain is Large ribosomal subunit protein uL2 (277 aa).

Disordered stretches follow at residues 37-60 (KNSTAGRNSNGHITTRHKGGGHKH) and 223-265 (VVMN…KRTD). Over residues 39–49 (STAGRNSNGHI) the composition is skewed to polar residues. Basic residues predominate over residues 50 to 60 (TTRHKGGGHKH). Residues 229-244 (DHPHGGGEGRTGEARE) show a composition bias toward basic and acidic residues.

Belongs to the universal ribosomal protein uL2 family. As to quaternary structure, part of the 50S ribosomal subunit. Forms a bridge to the 30S subunit in the 70S ribosome.

In terms of biological role, one of the primary rRNA binding proteins. Required for association of the 30S and 50S subunits to form the 70S ribosome, for tRNA binding and peptide bond formation. It has been suggested to have peptidyltransferase activity; this is somewhat controversial. Makes several contacts with the 16S rRNA in the 70S ribosome. This chain is Large ribosomal subunit protein uL2, found in Neisseria meningitidis serogroup C (strain 053442).